The primary structure comprises 149 residues: Calmodulin-1 (149 aa).

EF-hand domains lie at E8–N43, P44–D79, D81–K116, and L117–K149. Residues D21, D23, D25, C27, E32, D57, D59, N61, T63, E68, D94, D96, N98, E105, D130, D132, D134, Q136, and E141 each contribute to the Ca(2+) site.

Belongs to the calmodulin family. In terms of assembly, interacts with ZAR1 (via CaMBD domain). Binds to IQD1. Binds to MEE62 in a calcium-dependent manner.

The protein resides in the cytoplasm. Its subcellular location is the cell membrane. Its function is as follows. Calmodulin mediates the control of a large number of enzymes, ion channels and other proteins by Ca(2+). Among the enzymes to be stimulated by the calmodulin-Ca(2+) complex are a number of protein kinases and phosphatases. This chain is Calmodulin-1 (CAM1), found in Arabidopsis thaliana (Mouse-ear cress).